The sequence spans 510 residues: Chromosomal replication initiator protein DnaA (510 aa).

Residues 1-107 form a domain I, interacts with DnaA modulators region; it reads MTNDPGSGFA…VRIAPPPADD (107 aa). A domain II region spans residues 107–169; the sequence is DDDDSVAAAV…ADTSASAGGT (63 aa). The interval 119–168 is disordered; it reads PGLEASPETSQEVSDEIDDFGENAPNSRQSWPTHFKKRSTDADTSASAGG. The domain III, AAA+ region stretch occupies residues 170 to 386; sequence SLNRRYTFDT…GALIRVTAFA (217 aa). ATP-binding residues include glycine 214, glycine 216, lysine 217, and threonine 218. The segment at 387–510 is domain IV, binds dsDNA; it reads SLNKTPIDKA…TTRIRQRSKR (124 aa).

It belongs to the DnaA family. As to quaternary structure, oligomerizes as a right-handed, spiral filament on DNA at oriC.

It is found in the cytoplasm. In terms of biological role, plays an essential role in the initiation and regulation of chromosomal replication. ATP-DnaA binds to the origin of replication (oriC) to initiate formation of the DNA replication initiation complex once per cell cycle. Binds the DnaA box (a 9 base pair repeat at the origin) and separates the double-stranded (ds)DNA. Forms a right-handed helical filament on oriC DNA; dsDNA binds to the exterior of the filament while single-stranded (ss)DNA is stabiized in the filament's interior. The ATP-DnaA-oriC complex binds and stabilizes one strand of the AT-rich DNA unwinding element (DUE), permitting loading of DNA polymerase. After initiation quickly degrades to an ADP-DnaA complex that is not apt for DNA replication. Binds acidic phospholipids. This is Chromosomal replication initiator protein DnaA from Mycobacterium marinum (strain ATCC BAA-535 / M).